A 774-amino-acid chain; its full sequence is Lon protease 2 (774 aa).

In terms of domain architecture, Lon N-terminal spans 5–198 (YPLMPLRDIV…LLLEILFREL (194 aa)). Residue 350 to 357 (GPPGVGKT) coordinates ATP. Residues 588–769 (RDEVGLATGL…DQVLEQALLS (182 aa)) form the Lon proteolytic domain. Catalysis depends on residues Ser-675 and Lys-718.

Belongs to the peptidase S16 family. As to quaternary structure, homohexamer. Organized in a ring with a central cavity.

The protein resides in the cytoplasm. The enzyme catalyses Hydrolysis of proteins in presence of ATP.. Its function is as follows. ATP-dependent serine protease that mediates the selective degradation of mutant and abnormal proteins as well as certain short-lived regulatory proteins. Required for cellular homeostasis and for survival from DNA damage and developmental changes induced by stress. Degrades polypeptides processively to yield small peptide fragments that are 5 to 10 amino acids long. Binds to DNA in a double-stranded, site-specific manner. The sequence is that of Lon protease 2 from Desulfotalea psychrophila (strain LSv54 / DSM 12343).